The primary structure comprises 122 residues: Large ribosomal subunit protein uL14c (122 aa).

Belongs to the universal ribosomal protein uL14 family. In terms of assembly, part of the 50S ribosomal subunit.

It localises to the plastid. Its subcellular location is the chloroplast. In terms of biological role, binds to 23S rRNA. The polypeptide is Large ribosomal subunit protein uL14c (Chloranthus spicatus (Chulantree)).